A 244-amino-acid chain; its full sequence is Carbonyl reductase [NADPH] 2 (244 aa).

11–39 (LVTGAGKGIGRDTVKALHASGAKVVAVTR) contributes to the NADP(+) binding site. At serine 42 the chain carries Phosphoserine. Position 136 (serine 136) interacts with substrate. The Proton acceptor role is filled by tyrosine 149. Position 176 is a phosphoserine (serine 176).

This sequence belongs to the short-chain dehydrogenases/reductases (SDR) family. In terms of assembly, homotetramer. As to expression, predominantly expressed in lung, in ciliated cells, non-ciliated bronchiolar cells and type-II alveolar pneumocytes. Also detected in adipose tissue (at protein level). Low expression in testis, heart, kidney, spleen, brain and liver.

The protein resides in the mitochondrion matrix. It carries out the reaction a secondary alcohol + NADP(+) = a ketone + NADPH + H(+). Functionally, may function in the pulmonary metabolism of endogenous carbonyl compounds, such as aliphatic aldehydes and ketones derived from lipid peroxidation, 3-ketosteroids and fatty aldehydes, as well as in xenobiotic metabolism. This Mus musculus (Mouse) protein is Carbonyl reductase [NADPH] 2 (Cbr2).